The sequence spans 336 residues: 4-hydroxy-2-oxovalerate aldolase (336 aa).

The 251-residue stretch at 5 to 255 (IRIIDSTLRD…ETGVDLYKIM (251 aa)) folds into the Pyruvate carboxyltransferase domain. A substrate-binding site is contributed by 13–14 (RD). Asp-14 contacts Mn(2+). Catalysis depends on His-17, which acts as the Proton acceptor. 2 residues coordinate substrate: Ser-167 and His-194. Residues His-194 and His-196 each contribute to the Mn(2+) site. Tyr-285 serves as a coordination point for substrate.

This sequence belongs to the 4-hydroxy-2-oxovalerate aldolase family.

It catalyses the reaction (S)-4-hydroxy-2-oxopentanoate = acetaldehyde + pyruvate. This chain is 4-hydroxy-2-oxovalerate aldolase (mhpE), found in Carboxydothermus hydrogenoformans (strain ATCC BAA-161 / DSM 6008 / Z-2901).